A 289-amino-acid chain; its full sequence is Diaminopimelate epimerase (289 aa).

The substrate site is built by N13, Q47, and N67. Catalysis depends on C76, which acts as the Proton donor. Substrate-binding positions include 77–78 (GN), N167, N200, and 218–219 (ER). Residue C227 is the Proton acceptor of the active site. 228-229 (GT) is a substrate binding site.

Belongs to the diaminopimelate epimerase family. Homodimer.

The protein resides in the cytoplasm. It carries out the reaction (2S,6S)-2,6-diaminopimelate = meso-2,6-diaminopimelate. The protein operates within amino-acid biosynthesis; L-lysine biosynthesis via DAP pathway; DL-2,6-diaminopimelate from LL-2,6-diaminopimelate: step 1/1. Functionally, catalyzes the stereoinversion of LL-2,6-diaminopimelate (L,L-DAP) to meso-diaminopimelate (meso-DAP), a precursor of L-lysine and an essential component of the bacterial peptidoglycan. The sequence is that of Diaminopimelate epimerase from Burkholderia ambifaria (strain ATCC BAA-244 / DSM 16087 / CCUG 44356 / LMG 19182 / AMMD) (Burkholderia cepacia (strain AMMD)).